Consider the following 73-residue polypeptide: Translation initiation factor IF-1 (73 aa).

The region spanning 1–73 (MAKKDGVIEI…TRGRIVYRYK (73 aa)) is the S1-like domain.

The protein belongs to the IF-1 family. In terms of assembly, component of the 30S ribosomal translation pre-initiation complex which assembles on the 30S ribosome in the order IF-2 and IF-3, IF-1 and N-formylmethionyl-tRNA(fMet); mRNA recruitment can occur at any time during PIC assembly.

Its subcellular location is the cytoplasm. Its function is as follows. One of the essential components for the initiation of protein synthesis. Stabilizes the binding of IF-2 and IF-3 on the 30S subunit to which N-formylmethionyl-tRNA(fMet) subsequently binds. Helps modulate mRNA selection, yielding the 30S pre-initiation complex (PIC). Upon addition of the 50S ribosomal subunit IF-1, IF-2 and IF-3 are released leaving the mature 70S translation initiation complex. The chain is Translation initiation factor IF-1 from Leifsonia xyli subsp. xyli (strain CTCB07).